We begin with the raw amino-acid sequence, 368 residues long: Phosphate acyltransferase (368 aa).

This sequence belongs to the PlsX family. Homodimer. Probably interacts with PlsY.

The protein resides in the cytoplasm. The catalysed reaction is a fatty acyl-[ACP] + phosphate = an acyl phosphate + holo-[ACP]. It functions in the pathway lipid metabolism; phospholipid metabolism. Its function is as follows. Catalyzes the reversible formation of acyl-phosphate (acyl-PO(4)) from acyl-[acyl-carrier-protein] (acyl-ACP). This enzyme utilizes acyl-ACP as fatty acyl donor, but not acyl-CoA. The protein is Phosphate acyltransferase of Herpetosiphon aurantiacus (strain ATCC 23779 / DSM 785 / 114-95).